We begin with the raw amino-acid sequence, 111 residues long: Nucleoid-associated protein PputW619_3586 (111 aa).

The interval 87-111 is disordered; it reads EQSSQEKMGGMTAGMQLPPGFKMPF.

Belongs to the YbaB/EbfC family. In terms of assembly, homodimer.

It is found in the cytoplasm. The protein resides in the nucleoid. In terms of biological role, binds to DNA and alters its conformation. May be involved in regulation of gene expression, nucleoid organization and DNA protection. The protein is Nucleoid-associated protein PputW619_3586 of Pseudomonas putida (strain W619).